Reading from the N-terminus, the 977-residue chain is Short transient receptor potential channel 4 (977 aa).

At 1-324 the chain is on the cytoplasmic side; the sequence is MAQFYYKRNV…YDEFPGWRRR (324 aa). ANK repeat units follow at residues 29–60, 71–93, 96–118, and 141–165; these read LSPS…IYFK, RTAL…LSFN, VGDA…LLNH, and PDIT…VQKG. The Zn(2+) site is built by histidine 172, cysteine 176, cysteine 178, and cysteine 181. A coiled-coil region spans residues 223–260; that stretch reads LSWELQELSKVENEFKSEYEELSRQCKQFAKDLLDQTR. The segment at residues 325-359 is an intramembrane region (discontinuously helical); the sequence is HWAVKMVTCFIIGLLFPVFSVCYLIAPKSPLGLFI. Residues 360–362 are Cytoplasmic-facing; that stretch reads RKP. Residues 363–383 form a helical membrane-spanning segment; it reads FIKFICHTASYLTFLFLLLLA. Topologically, residues 384–403 are extracellular; sequence SQHIDRSDLNRQGPPPTIVE. The helical transmembrane segment at 404–418 threads the bilayer; the sequence is WMILPWVLGFIWGEI. Glutamate 417, glutamine 420, asparagine 435, and aspartate 438 together coordinate Ca(2+). Over 419–432 the chain is Cytoplasmic; sequence KQMWDGGLQDYIHD. The chain crosses the membrane as a helical span at residues 433-453; the sequence is WWNLMDFVMNSLYLATISLKI. Topologically, residues 454–475 are extracellular; the sequence is VAFVKYSALNPRESWDMWHPTL. Residues 476–498 traverse the membrane as a helical segment; sequence VAEALFAIANIFSSLRLISLFTA. Residues 499-511 are Cytoplasmic-facing; it reads NSHLGPLQISLGR. A helical membrane pass occupies residues 512–534; sequence MLLDILKFLFIYCLVLLAFANGL. At 535–599 the chain is on the extracellular side; sequence NQLYFYYEET…HEFTEFVGAT (65 aa). The cysteines at positions 549 and 554 are disulfide-linked. Residues 600 to 620 form a helical membrane-spanning segment; the sequence is MFGTYNVISLVVLLNMLIAMM. The segment at 615–977 is interaction with ITPR1, ITPR2 and ITPR3; sequence MLIAMMNNSY…THEDYVTTRL (363 aa). Residues 621-977 lie on the Cytoplasmic side of the membrane; it reads NNSYQLIADH…THEDYVTTRL (357 aa). The segment at 762–790 is disordered; the sequence is IQSANASKESSNSADSDEKSDSEGNSKDK. The segment covering 764 to 775 has biased composition (low complexity); that stretch reads SANASKESSNSA. Residues 777 to 788 are compositionally biased toward basic and acidic residues; that stretch reads SDEKSDSEGNSK. A phosphotyrosine; by FYN mark is found at tyrosine 959 and tyrosine 972. Positions 975–977 are PDZ-binding domain; it reads TRL.

This sequence belongs to the transient receptor (TC 1.A.4) family. STrpC subfamily. TRPC4 sub-subfamily. As to quaternary structure, homotetramer. Heterotetramer with TRPC1 and/or TRPC5. Forms a heteromeric ion channel with TRPC1, with a 1:3 TRPC1:TRPC4 stoichiometry. Interacts with TRPC4AP. Isoform alpha but not isoform beta interacts with ITPR1, ITPR2 and ITPR3. Interacts with (via PDZ-binding domain) with NHERF1. Interacts with MX1 and RNF24. Interacts (via CIRB domain) with SESTD1 (via spectrin 1 repeat). Interacts with CDH5 and CTNNB1. Interacts with SPTAN1 (via C-terminal spectrin repeats) and SPTBN5 (via C-terminus). Interacts (via protein 4.1-binding domain) with EPB41L2. Interacts with PLSCR1. Post-translationally, phosphorylation modulates TRPC channel function by regulating the level of TRPC4 at the cell surface and by increasing the association with NHERF1. Strongly expressed in placenta. Expressed at lower levels in heart, pancreas, kidney and brain. Expressed in endothelial cells. Isoform alpha was found to be the predominant isoform. Isoform beta was not found in pancreas and brain.

The protein localises to the cell membrane. It carries out the reaction Ca(2+)(in) = Ca(2+)(out). It catalyses the reaction Na(+)(in) = Na(+)(out). The enzyme catalyses Li(+)(in) = Li(+)(out). The catalysed reaction is Cs(+)(in) = Cs(+)(out). With respect to regulation, may be operated by a phosphatidylinositol second messenger system activated by receptor tyrosine kinases or G-protein coupled receptors. May be activated by intracellular calcium store depletion. Inhibited by xanthine-based inhibitor Pico145. Its function is as follows. Forms a receptor-activated non-selective calcium permeant cation channel. Acts as a cell-cell contact-dependent endothelial calcium entry channel. Forms a homomeric ion channel or a heteromeric ion channel with TRPC1; the heteromeric ion channel has reduced calcium permeability compared to the homomeric channel. Also permeable to monovalent ions including sodium, lithium and cesium ions. In terms of biological role, forms a receptor-activated non-selective calcium permeant cation channel. This Homo sapiens (Human) protein is Short transient receptor potential channel 4 (TRPC4).